Reading from the N-terminus, the 290-residue chain is Elongation factor Ts (290 aa).

The involved in Mg(2+) ion dislocation from EF-Tu stretch occupies residues 82–85; it reads TDFV.

Belongs to the EF-Ts family.

The protein resides in the cytoplasm. Associates with the EF-Tu.GDP complex and induces the exchange of GDP to GTP. It remains bound to the aminoacyl-tRNA.EF-Tu.GTP complex up to the GTP hydrolysis stage on the ribosome. The protein is Elongation factor Ts of Thiobacillus denitrificans (strain ATCC 25259 / T1).